A 532-amino-acid polypeptide reads, in one-letter code: Muscarinic acetylcholine receptor M5 (532 aa).

The Extracellular portion of the chain corresponds to Met-1–Glu-29. N-linked (GlcNAc...) asparagine glycosylation is present at Asn-8. The helical transmembrane segment at Val-30–Ile-53 threads the bilayer. The Cytoplasmic segment spans residues Ser-54–Asn-66. A helical membrane pass occupies residues Tyr-67 to Tyr-87. Topologically, residues Thr-88–Asp-104 are extracellular. Cys-103 and Cys-183 are oxidised to a cystine. Residues Leu-105–Phe-126 traverse the membrane as a helical segment. The Cytoplasmic segment spans residues Asp-127 to Arg-146. The helical transmembrane segment at Ala-147–Trp-169 threads the bilayer. The Extracellular portion of the chain corresponds to Gln-170 to Pro-191. A helical membrane pass occupies residues Thr-192 to Cys-214. Residues Arg-215 to Thr-443 lie on the Cytoplasmic side of the membrane. Residues Ala-262 to Trp-294 form a disordered region. Positions Ser-270–Thr-281 are enriched in low complexity. Polar residues predominate over residues Gly-282–Ser-291. A helical membrane pass occupies residues Leu-444 to Val-464. Topologically, residues Ser-465–His-478 are extracellular. The helical transmembrane segment at Leu-479–Cys-498 threads the bilayer. Over Asn-499–Pro-532 the chain is Cytoplasmic. Phosphothreonine is present on residues Thr-501 and Thr-505.

This sequence belongs to the G-protein coupled receptor 1 family. Muscarinic acetylcholine receptor subfamily. CHRM5 sub-subfamily.

The protein resides in the cell membrane. It is found in the postsynaptic cell membrane. Its function is as follows. The muscarinic acetylcholine receptor mediates various cellular responses, including inhibition of adenylate cyclase, breakdown of phosphoinositides and modulation of potassium channels through the action of G proteins. Primary transducing effect is Pi turnover. In Homo sapiens (Human), this protein is Muscarinic acetylcholine receptor M5 (CHRM5).